A 130-amino-acid chain; its full sequence is Large-conductance mechanosensitive channel (130 aa).

2 consecutive transmembrane segments (helical) span residues 14 to 34 and 73 to 93; these read IIDL…VTSF and FVDF…LVKF.

This sequence belongs to the MscL family. In terms of assembly, homopentamer.

It localises to the cell membrane. Its function is as follows. Channel that opens in response to stretch forces in the membrane lipid bilayer. May participate in the regulation of osmotic pressure changes within the cell. This chain is Large-conductance mechanosensitive channel, found in Oceanobacillus iheyensis (strain DSM 14371 / CIP 107618 / JCM 11309 / KCTC 3954 / HTE831).